The chain runs to 231 residues: Enolase-phosphatase E1 (231 aa).

Mg(2+) is bound by residues D11 and E13. Substrate-binding positions include 125–126 and K162; that span reads SS. D188 is a Mg(2+) binding site.

Belongs to the HAD-like hydrolase superfamily. MasA/MtnC family. In terms of assembly, monomer. Mg(2+) serves as cofactor.

It localises to the cytoplasm. The protein resides in the nucleus. The enzyme catalyses 5-methylsulfanyl-2,3-dioxopentyl phosphate + H2O = 1,2-dihydroxy-5-(methylsulfanyl)pent-1-en-3-one + phosphate. The protein operates within amino-acid biosynthesis; L-methionine biosynthesis via salvage pathway; L-methionine from S-methyl-5-thio-alpha-D-ribose 1-phosphate: step 3/6. It participates in amino-acid biosynthesis; L-methionine biosynthesis via salvage pathway; L-methionine from S-methyl-5-thio-alpha-D-ribose 1-phosphate: step 4/6. Its function is as follows. Bifunctional enzyme that catalyzes the enolization of 2,3-diketo-5-methylthiopentyl-1-phosphate (DK-MTP-1-P) into the intermediate 2-hydroxy-3-keto-5-methylthiopentenyl-1-phosphate (HK-MTPenyl-1-P), which is then dephosphorylated to form the acireductone 1,2-dihydroxy-3-keto-5-methylthiopentene (DHK-MTPene). The sequence is that of Enolase-phosphatase E1 from Pyricularia oryzae (strain 70-15 / ATCC MYA-4617 / FGSC 8958) (Rice blast fungus).